The sequence spans 432 residues: Amino-acid acetyltransferase (432 aa).

Residues 286–425 form the N-acetyltransferase domain; it reads ELVREAAIED…ASLYNYQRNS (140 aa).

It belongs to the acetyltransferase family. ArgA subfamily.

The protein resides in the cytoplasm. The catalysed reaction is L-glutamate + acetyl-CoA = N-acetyl-L-glutamate + CoA + H(+). Its pathway is amino-acid biosynthesis; L-arginine biosynthesis; N(2)-acetyl-L-ornithine from L-glutamate: step 1/4. In Pseudomonas fluorescens (strain Pf0-1), this protein is Amino-acid acetyltransferase.